A 359-amino-acid polypeptide reads, in one-letter code: DNA-directed RNA polymerase RPB3-11 homolog (359 aa).

The protein in the N-terminal section; belongs to the archaeal RpoD/eukaryotic RPB3 RNA polymerase subunit family. This sequence in the C-terminal section; belongs to the archaeal RpoL/eukaryotic RPB11/RPC19 RNA polymerase subunit family. In terms of assembly, part of the viral DNA-directed RNA polymerase that consists of 8 polII-like subunits (RPB1, RPB2, RPB3, RPB5, RPB6, RPB7, RPB9, RPB10), a capping enzyme and a termination factor.

It is found in the host cytoplasm. The protein localises to the virion. Component of the DNA-directed RNA polymerase (RNAP) that catalyzes the transcription in the cytoplasm of viral DNA into RNA using the four ribonucleoside triphosphates as substrates. The protein is DNA-directed RNA polymerase RPB3-11 homolog of Ornithodoros (relapsing fever ticks).